The following is a 953-amino-acid chain: UPF0746 protein DDB_G0281301 (953 aa).

The span at 1–10 (MVNNKRKEIE) shows a compositional bias: basic and acidic residues. Residues 1–23 (MVNNKRKEIENQENDNNDDNDGL) form a disordered region. A compositionally biased stretch (acidic residues) spans 11 to 21 (NQENDNNDDND). One can recognise an SAP domain in the interval 35-69 (YDSIRSKELQTIAKSLGLPIIGKKQEIYKRIEGYF).

This sequence belongs to the UPF0746 family.

This Dictyostelium discoideum (Social amoeba) protein is UPF0746 protein DDB_G0281301.